The sequence spans 455 residues: Alcohol acyl transferase 1 allele RGb (455 aa).

Residues histidine 164 and asparagine 385 each act as proton acceptor in the active site.

Belongs to the plant acyltransferase family.

Involved in the biosynthesis of volatile esters which confer ripe apple fruit flavor. Alcohol acyl transferase that can use a wide range of alcohols as substrate to produce esters. In Malus domestica (Apple), this protein is Alcohol acyl transferase 1 allele RGb.